The primary structure comprises 410 residues: Translation initiation factor 2 subunit gamma (410 aa).

The 198-residue stretch at 6–203 folds into the tr-type G domain; that stretch reads QSEVNIGMVG…AIQDFIPTPE (198 aa). The interval 15–22 is G1; the sequence is GHVDHGKT. 4 residues coordinate Mg(2+): Asp-18, Thr-22, Gly-43, and Ser-45. A GTP-binding site is contributed by 18 to 23; the sequence is DHGKTS. The segment at 43–47 is G2; that stretch reads GISIR. 4 residues coordinate Zn(2+): Cys-58, Cys-61, Cys-73, and Cys-76. A G3 region spans residues 90-93; the sequence is DAPG. Residues 146-149 and 181-183 each bind GTP; these read NKID and SAH. Residues 146–149 form a G4 region; sequence NKID. The G5 stretch occupies residues 181 to 183; sequence SAH.

This sequence belongs to the TRAFAC class translation factor GTPase superfamily. Classic translation factor GTPase family. EIF2G subfamily. In terms of assembly, heterotrimer composed of an alpha, a beta and a gamma chain. The cofactor is Mg(2+).

It carries out the reaction GTP + H2O = GDP + phosphate + H(+). EIF-2 functions in the early steps of protein synthesis by forming a ternary complex with GTP and initiator tRNA. The chain is Translation initiation factor 2 subunit gamma from Methanococcus maripaludis (strain DSM 14266 / JCM 13030 / NBRC 101832 / S2 / LL).